Reading from the N-terminus, the 47-residue chain is Large ribosomal subunit protein bL34 (47 aa).

It belongs to the bacterial ribosomal protein bL34 family.

This Corynebacterium jeikeium (strain K411) protein is Large ribosomal subunit protein bL34.